The primary structure comprises 502 residues: Cytochrome c-552 (502 aa).

An N-terminal signal peptide occupies residues 1–25 (MKYLTKSRVIATIAMLGCLSVSAWA). His-105 contributes to the heme c binding site. Heme-binding residues include Cys-133, Cys-136, and Lys-137. Positions 171, 174, 175, 220, 223, and 224 each coordinate heme c. Residues Glu-226, Tyr-227, Lys-271, and Gln-273 each contribute to the Ca(2+) site. Tyr-227 lines the substrate pocket. A substrate-binding site is contributed by His-274. Heme c is bound by residues His-285, Cys-292, Cys-295, His-296, His-311, Cys-324, Cys-327, His-328, and His-403. Positions 481–502 (RERGLLPEVTPKSVTTPKVDAK) are disordered.

It belongs to the cytochrome c-552 family. Requires Ca(2+) as cofactor. Heme c is required as a cofactor.

It is found in the periplasm. It catalyses the reaction 6 Fe(III)-[cytochrome c] + NH4(+) + 2 H2O = 6 Fe(II)-[cytochrome c] + nitrite + 8 H(+). The protein operates within nitrogen metabolism; nitrate reduction (assimilation). In terms of biological role, catalyzes the reduction of nitrite to ammonia, consuming six electrons in the process. This chain is Cytochrome c-552, found in Haemophilus ducreyi (strain 35000HP / ATCC 700724).